Reading from the N-terminus, the 630-residue chain is L-amino-acid oxidase (630 aa).

The first 21 residues, 1–21 (MAGLALRLVLAATLLGLAGSL), serve as a signal peptide directing secretion. A disulfide bridge connects residues C35 and C198. Residue N53 is glycosylated (N-linked (GlcNAc...) asparagine). Residues 68-69 (VA), 88-89 (EA), R96, and 112-115 (GAMR) contribute to the FAD site. R115 provides a ligand contact to substrate. Residues N133 and N219 are each glycosylated (N-linked (GlcNAc...) asparagine). Position 286 (V286) interacts with FAD. Position 395 (Y395) interacts with substrate. FAD-binding positions include E479 and 486–491 (GWVETA). 486–487 (GW) contacts substrate. Residues 532-554 (GERPEEQQAREEVSPDEQEPSHK) are disordered.

The protein belongs to the flavin monoamine oxidase family. FIG1 subfamily. FAD is required as a cofactor. Primarily found in immune tissues. As to expression, primarily found in immune tissues, mostly in B-lymphocytes. In terms of tissue distribution, restricted to the testis, predominantly in Sertoli cells at the periphery of the ducts, and the brain, including Purkinje cells, hippocampus and mitral cells in the olfactory bulb. No isoform 2 expression in fetal tissues.

It localises to the secreted. The protein localises to the cytoplasmic vesicle. The protein resides in the secretory vesicle. Its subcellular location is the acrosome. It is found in the lysosome. The catalysed reaction is an L-alpha-amino acid + O2 + H2O = a 2-oxocarboxylate + H2O2 + NH4(+). It carries out the reaction L-tryptophan + O2 + H2O = indole-3-pyruvate + H2O2 + NH4(+). It catalyses the reaction L-phenylalanine + O2 + H2O = 3-phenylpyruvate + H2O2 + NH4(+). The enzyme catalyses L-tyrosine + O2 + H2O = 3-(4-hydroxyphenyl)pyruvate + H2O2 + NH4(+). The catalysed reaction is L-arginine + O2 + H2O = 5-guanidino-2-oxopentanoate + H2O2 + NH4(+). Its pathway is amino-acid degradation; L-tryptophan degradation via pyruvate pathway. Its function is as follows. Secreted L-amino-acid oxidase that acts as a key immunoregulator. Has preference for L-aromatic amino acids: converts phenylalanine (Phe), tyrosine (Tyr) and tryptophan (Trp) to phenylpyruvic acid (PP), hydroxyphenylpyruvic acid (HPP), and indole-3-pyruvic acid (I3P), respectively. Also has weak L-arginine oxidase activity. Acts as a negative regulator of anti-tumor immunity by mediating Trp degradation via an indole pyruvate pathway that activates the transcription factor AHR. IL4I1-mediated Trp catabolism generates I3P, giving rise to indole metabolites (indole-3-acetic acid (IAA) and indole-3-aldehyde (I3A)) and kynurenic acid, which act as ligands for AHR, a ligand-activated transcription factor that plays important roles in immunity and cancer. AHR activation by indoles following IL4I1-mediated Trp degradation enhances tumor progression by promoting cancer cell motility and suppressing adaptive immunity. Also has an immunoregulatory function in some immune cell, probably by mediating Trp degradation and promoting downstream AHR activation: inhibits T-cell activation and proliferation, promotes the differentiation of naive CD4(+) T-cells into FOXP3(+) regulatory T-cells (Treg) and regulates the development and function of B-cells. Also regulates M2 macrophage polarization by inhibiting T-cell activation. Also has antibacterial properties by inhibiting growth of Gram negative and Gram positive bacteria through the production of NH4(+) and H2O2. The sequence is that of L-amino-acid oxidase from Mus musculus (Mouse).